Consider the following 118-residue polypeptide: Membrane-anchored ubiquitin-fold protein 3 (118 aa).

Residues 7 to 73 (IDIKFRLYDG…LENNKTVGQC (67 aa)) form the Ubiquitin-like domain. C113 is lipidated: S-palmitoyl cysteine. C115 carries the post-translational modification Cysteine methyl ester. A lipid anchor (S-geranylgeranyl cysteine) is attached at C115. A propeptide spans 116-118 (TIL) (removed in mature form).

As to expression, ubiquitous, but three fold higher expression in senescing leaves.

Its subcellular location is the cell membrane. May serve as docking site to facilitate the association of other proteins to the plasma membrane. The sequence is that of Membrane-anchored ubiquitin-fold protein 3 (MUB3) from Arabidopsis thaliana (Mouse-ear cress).